The chain runs to 539 residues: CTP synthase (539 aa).

The interval Met1–Phe268 is amidoligase domain. Ser14 contacts CTP. Ser14 is a UTP binding site. Ser15–Leu20 is a binding site for ATP. Tyr55 serves as a coordination point for L-glutamine. An ATP-binding site is contributed by Asp72. Asp72 and Glu142 together coordinate Mg(2+). CTP is bound by residues Asp149–Glu151, Lys188–Gln193, and Lys224. Residues Lys188 to Gln193 and Lys224 each bind UTP. Leu242 lines the ATP pocket. The Glutamine amidotransferase type-1 domain occupies Arg294 to Glu532. Gly353 lines the L-glutamine pocket. Catalysis depends on Cys380, which acts as the Nucleophile; for glutamine hydrolysis. L-glutamine is bound by residues Leu381–Gln384, Glu404, and Arg460. Active-site residues include His505 and Glu507.

The protein belongs to the CTP synthase family. In terms of assembly, homotetramer.

It carries out the reaction UTP + L-glutamine + ATP + H2O = CTP + L-glutamate + ADP + phosphate + 2 H(+). The enzyme catalyses L-glutamine + H2O = L-glutamate + NH4(+). The catalysed reaction is UTP + NH4(+) + ATP = CTP + ADP + phosphate + 2 H(+). It functions in the pathway pyrimidine metabolism; CTP biosynthesis via de novo pathway; CTP from UDP: step 2/2. With respect to regulation, allosterically activated by GTP, when glutamine is the substrate; GTP has no effect on the reaction when ammonia is the substrate. The allosteric effector GTP functions by stabilizing the protein conformation that binds the tetrahedral intermediate(s) formed during glutamine hydrolysis. Inhibited by the product CTP, via allosteric rather than competitive inhibition. Functionally, catalyzes the ATP-dependent amination of UTP to CTP with either L-glutamine or ammonia as the source of nitrogen. May be involved in lipopolysaccharide biosynthesis, potentially channelling CTP directly to CMP-KDO synthetase. Regulates intracellular CTP levels through interactions with the four ribonucleotide triphosphates. The sequence is that of CTP synthase from Chlamydia trachomatis serovar D (strain ATCC VR-885 / DSM 19411 / UW-3/Cx).